A 560-amino-acid chain; its full sequence is NAD-dependent malic enzyme (560 aa).

The active-site Proton donor is Tyr100. Position 153 (Arg153) interacts with NAD(+). The active-site Proton acceptor is Lys171. Residues Glu242, Asp243, and Asp266 each contribute to the a divalent metal cation site. Asp266 and Asn413 together coordinate NAD(+).

It belongs to the malic enzymes family. As to quaternary structure, homotetramer. Mg(2+) serves as cofactor. Requires Mn(2+) as cofactor.

The catalysed reaction is (S)-malate + NAD(+) = pyruvate + CO2 + NADH. It catalyses the reaction oxaloacetate + H(+) = pyruvate + CO2. The polypeptide is NAD-dependent malic enzyme (Psychrobacter arcticus (strain DSM 17307 / VKM B-2377 / 273-4)).